A 479-amino-acid polypeptide reads, in one-letter code: Tegument protein VP16 homolog (479 aa).

This sequence belongs to the herpesviridae tegument protein VP16 protein family. In terms of assembly, associates with the VP16-induced complex; binding to host HCFC1 activates VP16 for association with the octamer motif-binding host protein POU2F1, to form a multiprotein-DNA complex responsible for activating transcription of the viral immediate early genes.

Its subcellular location is the virion tegument. The protein resides in the host nucleus. Transcriptional activator of immediate-early (IE) gene products (alpha genes). Acts as a key activator of lytic infection by initiating the lytic program through the assembly of the transcriptional regulatory VP16-induced complex composed of VP16 and two cellular factors, HCFC1 and POU2F1. VP16-induced complex represents a regulatory switch: when it is on, it promotes IE-gene expression and thus lytic infection, and when it is off, it limits IE-gene transcription favoring latent infection. Functionally, may play a role in the aggregation of tegument proteins around nucleocapsids during virus morphogenesis. In Equus caballus (Horse), this protein is Tegument protein VP16 homolog.